Consider the following 253-residue polypeptide: Ribosomal RNA small subunit methyltransferase G (253 aa).

Residues Gly84, Phe89, 135–136 (AE), and Arg154 each bind S-adenosyl-L-methionine. Residues 228-253 (TPAKYPRREGVPTHQPLFWKAKEQSR) are disordered.

This sequence belongs to the methyltransferase superfamily. RNA methyltransferase RsmG family.

It is found in the cytoplasm. Functionally, specifically methylates the N7 position of a guanine in 16S rRNA. In Deinococcus radiodurans (strain ATCC 13939 / DSM 20539 / JCM 16871 / CCUG 27074 / LMG 4051 / NBRC 15346 / NCIMB 9279 / VKM B-1422 / R1), this protein is Ribosomal RNA small subunit methyltransferase G.